The primary structure comprises 95 residues: Putative RelE-like toxin protein (95 aa).

It belongs to the RelE toxin family.

In terms of biological role, toxic component of a type II toxin-antitoxin (TA) system. The polypeptide is Putative RelE-like toxin protein (Escherichia coli).